Reading from the N-terminus, the 349-residue chain is UDP-N-acetylenolpyruvoylglucosamine reductase (349 aa).

The FAD-binding PCMH-type domain occupies 24–197; the sequence is FGIDATARFA…VAVTFRLPKR (174 aa). Residue Arg-173 is part of the active site. Ser-249 (proton donor) is an active-site residue. The active site involves Glu-345.

It belongs to the MurB family. It depends on FAD as a cofactor.

It is found in the cytoplasm. It carries out the reaction UDP-N-acetyl-alpha-D-muramate + NADP(+) = UDP-N-acetyl-3-O-(1-carboxyvinyl)-alpha-D-glucosamine + NADPH + H(+). It functions in the pathway cell wall biogenesis; peptidoglycan biosynthesis. Its function is as follows. Cell wall formation. The polypeptide is UDP-N-acetylenolpyruvoylglucosamine reductase (Burkholderia ambifaria (strain ATCC BAA-244 / DSM 16087 / CCUG 44356 / LMG 19182 / AMMD) (Burkholderia cepacia (strain AMMD))).